The primary structure comprises 861 residues: Extra-large guanine nucleotide-binding protein 2 (861 aa).

Disordered regions lie at residues 1–32 (MAAVIRKLLPFPSPNPKRDNRESDDDDETSSG) and 121–168 (VSGS…DDRV). Basic and acidic residues predominate over residues 131–143 (KRLDVPEEVKSPA). Residues 146–156 (RLSPSSPLSAS) are compositionally biased toward low complexity. The segment covering 157-168 (AREEDHLDDDRV) has biased composition (basic and acidic residues). Residues 204–211 (RAERKGKR) carry the Nuclear localization signal motif. The RING-type; degenerate zinc-finger motif lies at 214–257 (CYRCQLGNRFTEKEVCIVCDAKYCFNCVRRAMGAMPEGRKCQAC). Residues 461–853 (MLNKLLLIGS…TSMFQEMSTT (393 aa)) form the G-alpha domain. The G1 motif stretch occupies residues 464–477 (KLLLIGSEKGGATT). Residue 469–477 (GSEKGGATT) coordinates GTP. Thr-476 is a binding site for Ca(2+). Residues 523–545 (EMSNDQSSGNVGDETSAKPGNSI) form a disordered region. 624–632 (DILQAEGLS) contacts GTP. The G2 motif stretch occupies residues 624-632 (DILQAEGLS). Ser-632 lines the Ca(2+) pocket. The tract at residues 665–674 (YQLIRLNPRS) is G3 motif. The G4 motif stretch occupies residues 737–744 (LLVLTKFD). 741 to 744 (TKFD) contacts GTP. The G5 motif stretch occupies residues 818-823 (QVSLES).

The protein belongs to the G-alpha family. XLG subfamily. Interacts with GB1. Component of a G-protein complex at least composed of XLG2 and GB1. Interacts with RTV1. It depends on Ca(2+) as a cofactor. As to expression, ubiquitous. Strongly expressed in vascular tissues, root and shoot meristems and lateral root primordia.

It is found in the nucleus. Functionally, guanine nucleotide-binding proteins (G proteins) are involved as modulators or transducers in various transmembrane signaling systems. Binds GTP with specificity. Plays a role in the root morphogenesis by regulation of the cell proliferation. Acts as a positive regulator in resistance to pathogen that triggers the salicylic acid (SA) pathway. Promotes the DNA binding activity of RTV1 specifically to promoter regions of FT and SOC1 in vivo leading to the activation of floral integrator genes. The sequence is that of Extra-large guanine nucleotide-binding protein 2 (XLG2) from Arabidopsis thaliana (Mouse-ear cress).